The primary structure comprises 344 residues: Beta-hexosaminidase (344 aa).

Residues Asp-60, Arg-68, Arg-132, and 162–163 (KH) contribute to the substrate site. The active-site Proton donor/acceptor is His-175. The Nucleophile role is filled by Asp-247.

The protein belongs to the glycosyl hydrolase 3 family. NagZ subfamily.

The protein resides in the cytoplasm. It carries out the reaction Hydrolysis of terminal non-reducing N-acetyl-D-hexosamine residues in N-acetyl-beta-D-hexosaminides.. It participates in cell wall biogenesis; peptidoglycan recycling. In terms of biological role, plays a role in peptidoglycan recycling by cleaving the terminal beta-1,4-linked N-acetylglucosamine (GlcNAc) from peptide-linked peptidoglycan fragments, giving rise to free GlcNAc, anhydro-N-acetylmuramic acid and anhydro-N-acetylmuramic acid-linked peptides. The chain is Beta-hexosaminidase from Haemophilus ducreyi (strain 35000HP / ATCC 700724).